We begin with the raw amino-acid sequence, 553 residues long: Putative transport protein YidE (553 aa).

5 consecutive transmembrane segments (helical) span residues Ile-4–Ile-24, Gly-28–Asp-48, Phe-65–Ser-85, Leu-95–Phe-115, and Met-158–Met-178. RCK C-terminal domains lie at Lys-192 to Lys-276 and Asp-279 to Asn-361. Transmembrane regions (helical) follow at residues Met-371–Val-391, Gly-393–Leu-413, Leu-437–Thr-457, Leu-464–Leu-484, Tyr-493–Ala-513, and Leu-533–Gly-553.

It belongs to the AAE transporter (TC 2.A.81) family. YidE subfamily.

It localises to the cell membrane. In Salmonella heidelberg (strain SL476), this protein is Putative transport protein YidE.